A 363-amino-acid polypeptide reads, in one-letter code: Aminomethyltransferase (363 aa).

This sequence belongs to the GcvT family. In terms of assembly, the glycine cleavage system is composed of four proteins: P, T, L and H.

The catalysed reaction is N(6)-[(R)-S(8)-aminomethyldihydrolipoyl]-L-lysyl-[protein] + (6S)-5,6,7,8-tetrahydrofolate = N(6)-[(R)-dihydrolipoyl]-L-lysyl-[protein] + (6R)-5,10-methylene-5,6,7,8-tetrahydrofolate + NH4(+). The glycine cleavage system catalyzes the degradation of glycine. The sequence is that of Aminomethyltransferase from Staphylococcus saprophyticus subsp. saprophyticus (strain ATCC 15305 / DSM 20229 / NCIMB 8711 / NCTC 7292 / S-41).